A 365-amino-acid polypeptide reads, in one-letter code: Peptide chain release factor 2 (365 aa).

The residue at position 252 (Gln-252) is an N5-methylglutamine.

The protein belongs to the prokaryotic/mitochondrial release factor family. In terms of processing, methylated by PrmC. Methylation increases the termination efficiency of RF2.

Its subcellular location is the cytoplasm. Functionally, peptide chain release factor 2 directs the termination of translation in response to the peptide chain termination codons UGA and UAA. This chain is Peptide chain release factor 2 (prfB), found in Haemophilus influenzae (strain ATCC 51907 / DSM 11121 / KW20 / Rd).